Here is a 706-residue protein sequence, read N- to C-terminus: SPX domain-containing membrane protein OsI_32082 (706 aa).

The region spanning 2–145 (VNFSNKLTKD…GYKFTDYYVR (144 aa)) is the SPX domain. Helical transmembrane passes span 251–271 (MSLV…YIVV), 281–301 (LGAA…AQVF), 318–338 (LLFS…AFDL), 340–359 (SLTI…ARAV), 378–398 (AAFV…AGLL), and 414–434 (LPGW…WISF). The segment at 475–498 (SEQDEEDDNGDEEHNETLSSSTTT) is disordered. Residues 476 to 488 (EQDEEDDNGDEEH) show a composition bias toward acidic residues. The next 5 membrane-spanning stretches (helical) occupy residues 520–540 (LLIY…SSVV), 554–574 (VFLA…GTYI), 583–603 (ILVA…KLTV), 611–631 (VCSA…NLSL), and 678–698 (LLNA…AATL).

It belongs to the major facilitator superfamily.

The protein localises to the membrane. In Oryza sativa subsp. indica (Rice), this protein is SPX domain-containing membrane protein OsI_32082.